Here is a 71-residue protein sequence, read N- to C-terminus: uncharacterized protein (71 aa).

Residues 1-16 are compositionally biased toward basic residues; that stretch reads MAKSQAKKKRGHRLRN. 2 disordered regions span residues 1 to 39 and 51 to 71; these read MAKSQAKKKRGHRLRNGGRDVLLSRGSTPSFSTHGRMTK and KNPYDHTAVDDKDFFVPQKAA. The span at 25 to 35 shows a compositional bias: polar residues; the sequence is RGSTPSFSTHG. Residues 51-64 are compositionally biased toward basic and acidic residues; the sequence is KNPYDHTAVDDKDF.

This is an uncharacterized protein from Bacillus subtilis (strain 168).